The primary structure comprises 201 residues: Ribosomal RNA large subunit methyltransferase E (201 aa).

The S-adenosyl-L-methionine site is built by Gly-40, Trp-42, Asp-62, Asp-78, and Asp-101. The Proton acceptor role is filled by Lys-141.

This sequence belongs to the class I-like SAM-binding methyltransferase superfamily. RNA methyltransferase RlmE family.

Its subcellular location is the cytoplasm. It catalyses the reaction uridine(2552) in 23S rRNA + S-adenosyl-L-methionine = 2'-O-methyluridine(2552) in 23S rRNA + S-adenosyl-L-homocysteine + H(+). Functionally, specifically methylates the uridine in position 2552 of 23S rRNA at the 2'-O position of the ribose in the fully assembled 50S ribosomal subunit. This Anaplasma marginale (strain Florida) protein is Ribosomal RNA large subunit methyltransferase E.